A 43-amino-acid polypeptide reads, in one-letter code: Mu-conotoxin-like Cal 12.2c (43 aa).

Arginine 1 is a propeptide. Cystine bridges form between cysteine 4–cysteine 16, cysteine 11–cysteine 24, cysteine 18–cysteine 29, and cysteine 23–cysteine 35. Residue tryptophan 31 is modified to 6'-bromotryptophan. Proline 36 is subject to 4-hydroxyproline. Tryptophan 40 is modified (6'-bromotryptophan).

In terms of tissue distribution, expressed by the venom duct.

It is found in the secreted. Functionally, mu-conotoxins block voltage-gated sodium channels. This toxin reversibly blocks voltage-gated sodium channel in cephalopods, with no alteration in the voltage dependence of sodium conductance or on the kinetics of inactivation. This chain is Mu-conotoxin-like Cal 12.2c, found in Californiconus californicus (California cone).